The primary structure comprises 194 residues: Xanthine phosphoribosyltransferase (194 aa).

Xanthine contacts are provided by leucine 20 and asparagine 27. Position 128–132 (128–132 (ANGQA)) interacts with 5-phospho-alpha-D-ribose 1-diphosphate. Lysine 156 serves as a coordination point for xanthine.

It belongs to the purine/pyrimidine phosphoribosyltransferase family. Xpt subfamily. As to quaternary structure, homodimer.

It is found in the cytoplasm. The enzyme catalyses XMP + diphosphate = xanthine + 5-phospho-alpha-D-ribose 1-diphosphate. It participates in purine metabolism; XMP biosynthesis via salvage pathway; XMP from xanthine: step 1/1. Functionally, converts the preformed base xanthine, a product of nucleic acid breakdown, to xanthosine 5'-monophosphate (XMP), so it can be reused for RNA or DNA synthesis. The chain is Xanthine phosphoribosyltransferase from Bacillus licheniformis (strain ATCC 14580 / DSM 13 / JCM 2505 / CCUG 7422 / NBRC 12200 / NCIMB 9375 / NCTC 10341 / NRRL NRS-1264 / Gibson 46).